We begin with the raw amino-acid sequence, 457 residues long: uncharacterized protein (457 aa).

The TRAM domain maps to 6 to 64 (PVHKGEVLDVTIMDLTYQGMGVAKVDNYPIFIENALPEEKITVKVTKTTKNFAFGDVEK). S-adenosyl-L-methionine contacts are provided by Q287, Y316, E337, and D385. Residue C412 is the Nucleophile of the active site.

This sequence belongs to the class I-like SAM-binding methyltransferase superfamily. RNA M5U methyltransferase family.

This is an uncharacterized protein from Lactiplantibacillus plantarum (strain ATCC BAA-793 / NCIMB 8826 / WCFS1) (Lactobacillus plantarum).